Consider the following 141-residue polypeptide: Hemoglobin subunit alpha-3 (141 aa).

An N-acetylserine modification is found at serine 1. The 141-residue stretch at 1 to 141 (SLSASEKAAV…VSAVLTSKYR (141 aa)) folds into the Globin domain. Histidine 58 contacts O2. Histidine 87 contacts heme b.

Belongs to the globin family. In terms of assembly, heterotetramer of two alpha chains and two beta chains. Red blood cells.

Functionally, this is a tadpole (larval) alpha chain. This is Hemoglobin subunit alpha-3 from Aquarana catesbeiana (American bullfrog).